The sequence spans 82 residues: Small ribosomal subunit protein bS16 (82 aa).

The protein belongs to the bacterial ribosomal protein bS16 family.

In Vibrio campbellii (strain ATCC BAA-1116), this protein is Small ribosomal subunit protein bS16.